A 136-amino-acid polypeptide reads, in one-letter code: Aspartate 1-decarboxylase (136 aa).

The active-site Schiff-base intermediate with substrate; via pyruvic acid is the S25. S25 bears the Pyruvic acid (Ser) mark. T57 serves as a coordination point for substrate. The active-site Proton donor is the Y58. 73-75 contacts substrate; the sequence is GAA.

The protein belongs to the PanD family. Heterooctamer of four alpha and four beta subunits. The cofactor is pyruvate. In terms of processing, is synthesized initially as an inactive proenzyme, which is activated by self-cleavage at a specific serine bond to produce a beta-subunit with a hydroxyl group at its C-terminus and an alpha-subunit with a pyruvoyl group at its N-terminus.

The protein resides in the cytoplasm. The enzyme catalyses L-aspartate + H(+) = beta-alanine + CO2. It functions in the pathway cofactor biosynthesis; (R)-pantothenate biosynthesis; beta-alanine from L-aspartate: step 1/1. Functionally, catalyzes the pyruvoyl-dependent decarboxylation of aspartate to produce beta-alanine. The chain is Aspartate 1-decarboxylase from Corynebacterium efficiens (strain DSM 44549 / YS-314 / AJ 12310 / JCM 11189 / NBRC 100395).